The sequence spans 881 residues: DNA mismatch repair protein MutS (881 aa).

Position 632–639 (632–639 (GPNMGGKS)) interacts with ATP.

Belongs to the DNA mismatch repair MutS family.

Functionally, this protein is involved in the repair of mismatches in DNA. It is possible that it carries out the mismatch recognition step. This protein has a weak ATPase activity. This chain is DNA mismatch repair protein MutS, found in Chelativorans sp. (strain BNC1).